The following is a 465-amino-acid chain: UDP-N-acetylmuramoylalanine--D-glutamate ligase (465 aa).

115–121 (GTDGKTT) is a binding site for ATP.

This sequence belongs to the MurCDEF family.

It is found in the cytoplasm. It carries out the reaction UDP-N-acetyl-alpha-D-muramoyl-L-alanine + D-glutamate + ATP = UDP-N-acetyl-alpha-D-muramoyl-L-alanyl-D-glutamate + ADP + phosphate + H(+). The protein operates within cell wall biogenesis; peptidoglycan biosynthesis. Its function is as follows. Cell wall formation. Catalyzes the addition of glutamate to the nucleotide precursor UDP-N-acetylmuramoyl-L-alanine (UMA). This chain is UDP-N-acetylmuramoylalanine--D-glutamate ligase, found in Chlorobaculum tepidum (strain ATCC 49652 / DSM 12025 / NBRC 103806 / TLS) (Chlorobium tepidum).